The following is a 310-amino-acid chain: Tagatose-6-phosphate kinase (310 aa).

This sequence belongs to the carbohydrate kinase PfkB family. LacC subfamily.

The enzyme catalyses D-tagatofuranose 6-phosphate + ATP = D-tagatofuranose 1,6-bisphosphate + ADP + H(+). Its pathway is carbohydrate metabolism; D-tagatose 6-phosphate degradation; D-glyceraldehyde 3-phosphate and glycerone phosphate from D-tagatose 6-phosphate: step 1/2. This Streptococcus uberis (strain ATCC BAA-854 / 0140J) protein is Tagatose-6-phosphate kinase.